The sequence spans 616 residues: Dihydroxy-acid dehydratase (616 aa).

Asp81 contacts Mg(2+). Residue Cys122 participates in [2Fe-2S] cluster binding. The Mg(2+) site is built by Asp123 and Lys124. An N6-carboxylysine modification is found at Lys124. Cys195 lines the [2Fe-2S] cluster pocket. Residue Glu491 participates in Mg(2+) binding. Ser517 acts as the Proton acceptor in catalysis.

The protein belongs to the IlvD/Edd family. As to quaternary structure, homodimer. Requires [2Fe-2S] cluster as cofactor. Mg(2+) serves as cofactor.

The enzyme catalyses (2R)-2,3-dihydroxy-3-methylbutanoate = 3-methyl-2-oxobutanoate + H2O. It carries out the reaction (2R,3R)-2,3-dihydroxy-3-methylpentanoate = (S)-3-methyl-2-oxopentanoate + H2O. It participates in amino-acid biosynthesis; L-isoleucine biosynthesis; L-isoleucine from 2-oxobutanoate: step 3/4. Its pathway is amino-acid biosynthesis; L-valine biosynthesis; L-valine from pyruvate: step 3/4. Its function is as follows. Functions in the biosynthesis of branched-chain amino acids. Catalyzes the dehydration of (2R,3R)-2,3-dihydroxy-3-methylpentanoate (2,3-dihydroxy-3-methylvalerate) into 2-oxo-3-methylpentanoate (2-oxo-3-methylvalerate) and of (2R)-2,3-dihydroxy-3-methylbutanoate (2,3-dihydroxyisovalerate) into 2-oxo-3-methylbutanoate (2-oxoisovalerate), the penultimate precursor to L-isoleucine and L-valine, respectively. The chain is Dihydroxy-acid dehydratase from Escherichia coli (strain 55989 / EAEC).